The primary structure comprises 170 residues: Bacilliredoxin SRU_1493 (170 aa).

The tract at residues 140-170 is disordered; that stretch reads CGDEEPPADAPSRPDPSSSGEGLPSTFQSIT.

Belongs to the bacilliredoxin family.

This Salinibacter ruber (strain DSM 13855 / M31) protein is Bacilliredoxin SRU_1493.